A 319-amino-acid chain; its full sequence is MKPENKLPVLDLISAEMKTVVNTLQPDLPPWPATGTIAEQRQYYTLERRFWNAGAPEMATRAYMVPTKYGQVETRLFCPQPDSPATLFYLHGGGFILGNLDTHDRIMRLLASYSQCTVIGIDYTLSPEARFPQAIEEIVAACCYFHQQAEDYQINMSRIGFAGDSAGAMLALASALWLRDKQIDCGKVAGVLLWYGLYGLRDSVTRRLLGGVWDGLTQQDLQMYEEAYLSNDADRESPYYCLFNNDLTREVPPCFIAGAEFDPLLDDSRLLYQTLAAHQQPCEFKLYPGTLHAFLHYSRMMKTADEALRDGAQFFTAQL.

Positions 91–93 (HGG) match the Involved in the stabilization of the negatively charged intermediate by the formation of the oxyanion hole motif. Residues S165, D262, and H292 contribute to the active site.

Belongs to the 'GDXG' lipolytic enzyme family. Homodimer. Interacts with MalT and MelA.

It localises to the cytoplasm. Displays esterase activity towards short chain fatty esters (acyl chain length of up to 8 carbons). Able to hydrolyze triacetylglycerol (triacetin) and tributyrylglycerol (tributyrin), but not trioleylglycerol (triolein) or cholesterol oleate. Negatively regulates MalT activity by antagonizing maltotriose binding. Inhibits MelA galactosidase activity. This is Acetyl esterase from Escherichia coli O7:K1 (strain IAI39 / ExPEC).